The following is a 304-amino-acid chain: tRNA pseudouridine synthase B (304 aa).

Catalysis depends on D38, which acts as the Nucleophile.

It belongs to the pseudouridine synthase TruB family. Type 1 subfamily.

It catalyses the reaction uridine(55) in tRNA = pseudouridine(55) in tRNA. In terms of biological role, responsible for synthesis of pseudouridine from uracil-55 in the psi GC loop of transfer RNAs. The sequence is that of tRNA pseudouridine synthase B from Geobacter sulfurreducens (strain ATCC 51573 / DSM 12127 / PCA).